A 159-amino-acid polypeptide reads, in one-letter code: Eukaryotic translation initiation factor 5A-1 (159 aa).

Basic and acidic residues predominate over residues 1–12 (MSDEEHHFESKA). The segment at 1–23 (MSDEEHHFESKADAGASKTYPQQ) is disordered. At Lys52 the chain carries Hypusine.

It belongs to the eIF-5A family. Lys-52 undergoes hypusination, a unique post-translational modification that consists in the addition of a butylamino group from spermidine to lysine side chain, leading to the formation of the unusual amino acid hypusine. eIF-5As are the only known proteins to undergo this modification, which is essential for their function.

In terms of biological role, translation factor that promotes translation elongation and termination, particularly upon ribosome stalling at specific amino acid sequence contexts. Binds between the exit (E) and peptidyl (P) site of the ribosome and promotes rescue of stalled ribosome: specifically required for efficient translation of polyproline-containing peptides as well as other motifs that stall the ribosome. Acts as a ribosome quality control (RQC) cofactor by joining the RQC complex to facilitate peptidyl transfer during CAT tailing step. In Nicotiana plumbaginifolia (Leadwort-leaved tobacco), this protein is Eukaryotic translation initiation factor 5A-1 (EIF-5A1).